The following is a 153-amino-acid chain: Nuclear cap-binding protein subunit 2 (153 aa).

Residues Y17, Y40, 109–113 (RTDWD), 120–124 (RQYGR), and 130–131 (QV) contribute to the mRNA site. One can recognise an RRM domain in the interval 37–115 (CTLYVGNLSF…RIIRTDWDAG (79 aa)).

The protein belongs to the RRM NCBP2 family. As to quaternary structure, component of the nuclear cap-binding complex (CBC), a heterodimer composed of ncbp1/cbp80 and ncbp2/cbp20 that interacts with m7GpppG-capped RNA.

The protein localises to the nucleus. It is found in the cytoplasm. Functionally, component of the cap-binding complex (CBC), which binds co-transcriptionally to the 5' cap of pre-mRNAs and is involved in various processes such as pre-mRNA splicing, translation regulation, nonsense-mediated mRNA decay, RNA-mediated gene silencing (RNAi) by microRNAs (miRNAs) and mRNA export. The CBC complex is involved in mRNA export from the nucleus, leading to the recruitment of the mRNA export machinery to the 5' end of mRNA and to mRNA export in a 5' to 3' direction through the nuclear pore. The CBC complex is also involved in mediating U snRNA and intronless mRNAs export from the nucleus. The CBC complex is essential for a pioneer round of mRNA translation, before steady state translation when the CBC complex is replaced by cytoplasmic cap-binding protein eIF4E. The pioneer round of mRNA translation mediated by the CBC complex plays a central role in nonsense-mediated mRNA decay (NMD), NMD only taking place in mRNAs bound to the CBC complex, but not on eIF4E-bound mRNAs. The CBC complex enhances NMD in mRNAs containing at least one exon-junction complex (EJC), promoting the interaction between upf1 and upf2. The CBC complex is also involved in 'failsafe' NMD, which is independent of the EJC complex, while it does not participate in Staufen-mediated mRNA decay (SMD). During cell proliferation, the CBC complex is also involved in microRNAs (miRNAs) biogenesis via its interaction with srrt/ars2, thereby being required for miRNA-mediated RNA interference. The CBC complex also acts as a negative regulator of parn, thereby acting as an inhibitor of mRNA deadenylation. In the CBC complex, ncbp2/cbp20 recognizes and binds capped RNAs (m7GpppG-capped RNA) but requires ncbp1/cbp80 to stabilize the movement of its N-terminal loop and lock the CBC into a high affinity cap-binding state with the cap structure. The conventional cap-binding complex with NCBP2 binds both small nuclear RNA (snRNA) and messenger (mRNA) and is involved in their export from the nucleus. This Xenopus tropicalis (Western clawed frog) protein is Nuclear cap-binding protein subunit 2 (ncbp2).